Consider the following 545-residue polypeptide: Propane 2-monooxygenase, hydroxylase component large subunit (545 aa).

Residues Glu-97, Glu-127, His-130, Glu-192, Glu-226, and His-229 each coordinate Fe cation.

This sequence belongs to the TmoA/XamoA family. In terms of assembly, the propane 2-monooxygenase multicomponent enzyme system is composed of an electron transfer component and a monooxygenase component interacting with the effector protein PrmD. The electron transfer component is composed of a reductase (PrmB), and the monooxygenase component is formed by a large subunit (PrmA) and a small subunit (PrmC). Probably requires the presence of the chaperonin-like protein PrmG to ensure a productive folding, resulting of a soluble PrmA, which leads to the active form of PrmABCD. Fe(2+) is required as a cofactor.

It catalyses the reaction propane + NADH + O2 + H(+) = propan-2-ol + NAD(+) + H2O. The enzyme catalyses phenol + NADH + O2 + H(+) = hydroquinone + NAD(+) + H2O. Its function is as follows. Component of the propane 2-monooxygenase multicomponent enzyme system which is involved in the degradation of propane via the O2-dependent hydroxylation of propane. Under acetone induction, also able to catalyze the oxidation of phenol to yield hydroquinone. The sequence is that of Propane 2-monooxygenase, hydroxylase component large subunit from Gordonia sp. (strain TY-5).